Consider the following 295-residue polypeptide: Sulfotransferase 1A3 (295 aa).

48–53 (KSGTTW) provides a ligand contact to 3'-phosphoadenylyl sulfate. Dopamine is bound by residues Asp-86 and 106 to 108 (KSH). His-108 serves as the catalytic Proton acceptor. Residues Arg-130 and Ser-138 each coordinate 3'-phosphoadenylyl sulfate. Glu-146 is a dopamine binding site. 3'-phosphoadenylyl sulfate contacts are provided by residues Tyr-193, 227-232 (TSFKEM), and 257-259 (RKG).

It belongs to the sulfotransferase 1 family. Homodimer. In terms of processing, the N-terminus is blocked. As to expression, liver, colon, kidney, lung, brain, spleen, small intestine, placenta and leukocyte.

The protein localises to the cytoplasm. The enzyme catalyses a phenol + 3'-phosphoadenylyl sulfate = an aryl sulfate + adenosine 3',5'-bisphosphate + H(+). It carries out the reaction 4-nitrophenol + 3'-phosphoadenylyl sulfate = 4-nitrophenyl sulfate + adenosine 3',5'-bisphosphate. The catalysed reaction is dopamine + 3'-phosphoadenylyl sulfate = dopamine 3-O-sulfate + adenosine 3',5'-bisphosphate + H(+). It catalyses the reaction dopamine + 3'-phosphoadenylyl sulfate = dopamine 4-O-sulfate + adenosine 3',5'-bisphosphate + H(+). The enzyme catalyses serotonin + 3'-phosphoadenylyl sulfate = serotonin O-sulfate + adenosine 3',5'-bisphosphate + H(+). It carries out the reaction (R)-adrenaline + 3'-phosphoadenylyl sulfate = (R)-adrenaline 4'-O-sulfate + adenosine 3',5'-bisphosphate + H(+). The catalysed reaction is (R)-noradrenaline + 3'-phosphoadenylyl sulfate = (R)-noradrenaline 4'-O-sulfate + adenosine 3',5'-bisphosphate + H(+). It catalyses the reaction 3,3',5-triiodo-L-thyronine + 3'-phosphoadenylyl sulfate = 3,3',5-triiodo-L-thyronine sulfate + adenosine 3',5'-bisphosphate + H(+). The enzyme catalyses 3,3',5'-triiodo-L-thyronine + 3'-phosphoadenylyl sulfate = 3,3',5'-triiodo-L-thyronine sulfate + adenosine 3',5'-bisphosphate + H(+). It carries out the reaction 3,3'-diiodo-L-thyronine + 3'-phosphoadenylyl sulfate = 3,3'-diiodo-L-thyronine sulfate + adenosine 3',5'-bisphosphate + H(+). The catalysed reaction is L-thyroxine + 3'-phosphoadenylyl sulfate = L-thyroxine sulfate + adenosine 3',5'-bisphosphate + H(+). Functionally, sulfotransferase that utilizes 3'-phospho-5'-adenylyl sulfate (PAPS) as sulfonate donor to catalyze the sulfate conjugation of phenolic monoamines (neurotransmitters such as dopamine, (R)-adrenaline/epinephrine, (R)-noradrenaline/norepinephrine and serotonin) and phenolic and catechol drugs. Catalyzes the sulfation of T4 (L-thyroxine/3,5,3',5'-tetraiodothyronine), T3 (3,5,3'-triiodothyronine), rT3 (3,3',5'-triiodothyronine) and 3,3'-T2 (3,3'-diiodothyronine), with a substrate preference of 3,3'-T2 &gt; rT3 &gt; T3 &gt; T4. The protein is Sulfotransferase 1A3 (SULT1A3) of Homo sapiens (Human).